The chain runs to 262 residues: Hydroxyethylthiazole kinase (262 aa).

Residue Met50 participates in substrate binding. ATP contacts are provided by Arg125 and Thr171. Residue Gly198 coordinates substrate.

It belongs to the Thz kinase family. Mg(2+) serves as cofactor.

It carries out the reaction 5-(2-hydroxyethyl)-4-methylthiazole + ATP = 4-methyl-5-(2-phosphooxyethyl)-thiazole + ADP + H(+). Its pathway is cofactor biosynthesis; thiamine diphosphate biosynthesis; 4-methyl-5-(2-phosphoethyl)-thiazole from 5-(2-hydroxyethyl)-4-methylthiazole: step 1/1. In terms of biological role, catalyzes the phosphorylation of the hydroxyl group of 4-methyl-5-beta-hydroxyethylthiazole (THZ). The sequence is that of Hydroxyethylthiazole kinase from Escherichia coli O6:H1 (strain CFT073 / ATCC 700928 / UPEC).